A 380-amino-acid chain; its full sequence is Cytochrome b (380 aa).

The next 4 membrane-spanning stretches (helical) occupy residues 33–53 (FGSL…FLAM), 77–98 (WFIR…YIHV), 113–133 (WNVG…GYVL), and 178–198 (FFAF…VHLL). His83 and His97 together coordinate heme b. Residues His182 and His196 each contribute to the heme b site. His201 is an a ubiquinone binding site. 4 helical membrane-spanning segments follow: residues 226-246 (TKDI…VLFA), 288-308 (LGGV…PYLY), 320-340 (LTQL…WIGA), and 347-367 (FITI…ILMP).

Belongs to the cytochrome b family. The cytochrome bc1 complex contains 11 subunits: 3 respiratory subunits (MT-CYB, CYC1 and UQCRFS1), 2 core proteins (UQCRC1 and UQCRC2) and 6 low-molecular weight proteins (UQCRH/QCR6, UQCRB/QCR7, UQCRQ/QCR8, UQCR10/QCR9, UQCR11/QCR10 and a cleavage product of UQCRFS1). This cytochrome bc1 complex then forms a dimer. Requires heme b as cofactor.

It localises to the mitochondrion inner membrane. In terms of biological role, component of the ubiquinol-cytochrome c reductase complex (complex III or cytochrome b-c1 complex) that is part of the mitochondrial respiratory chain. The b-c1 complex mediates electron transfer from ubiquinol to cytochrome c. Contributes to the generation of a proton gradient across the mitochondrial membrane that is then used for ATP synthesis. In Cricetomys emini (Emin's giant pouched rat), this protein is Cytochrome b (MT-CYB).